The primary structure comprises 337 residues: Perakine reductase (337 aa).

The Proton donor role is filled by Tyr-57. His-126 is a substrate binding site. 205–214 (SPIGRGLFAG) serves as a coordination point for NADP(+).

The protein belongs to the aldo/keto reductase family.

The catalysed reaction is raucaffrinoline + NADP(+) = perakine + NADPH + H(+). Functionally, aldo-keto reductase involved in the biosynthesis of monoterpenoid indole alkaloids. Broad substrate specificity enzyme with a high selectivity in the group of alkaloids. Can use perakine, 19(S),20(R)-dihydro-peraksine-17,21-al, cinnamic aldehyde, p-coumaric aldehyde and 3-(3,4,5-trimethoxyphenyl)propanal as substrates, but not ketosteroids such as progesterone. NADPH could not be replaced by NADH. In Rauvolfia serpentina (Serpentine wood), this protein is Perakine reductase (PR).